The primary structure comprises 248 residues: MGYNKSLRYSRHDGTSCVIDNHHLKSLGAVLNDVRRKKDRIREAEYEPIIDIADQYMVTEDPFRGPGKNVRITLFKEIRRVHPDTMKLVCNWSGKEFLRETWTRFISEEFPITTDQEIMDLWFELQLRPMHPNRCYKFTMQYALGAHPDYVAHDVIRQQDPYYVGPNNIERINLSKKGFAFPLTCLQSVYNDNFERFFDDVLWPYFYRPLVYVGTTSAEIEEIMIEVSLLFKIKEFAPDVPLFTGPAY.

The protein belongs to the polyhedrin family.

Component of the virus occlusion bodies, which are large proteinaceous structures, that protect the virus from the outside environment for extended periods until they are ingested by insect larvae. The protein is Granulin of Cydia pomonella (Codling moth).